A 156-amino-acid polypeptide reads, in one-letter code: Aspartate carbamoyltransferase regulatory chain (156 aa).

Residues Cys110, Cys115, Cys140, and Cys143 each coordinate Zn(2+).

This sequence belongs to the PyrI family. In terms of assembly, contains catalytic and regulatory chains. It depends on Zn(2+) as a cofactor.

Its function is as follows. Involved in allosteric regulation of aspartate carbamoyltransferase. This Methanocella arvoryzae (strain DSM 22066 / NBRC 105507 / MRE50) protein is Aspartate carbamoyltransferase regulatory chain.